A 25-amino-acid chain; its full sequence is NWRKILGQIASVGAGLLGSLLAGYE.

It belongs to the grammistin family. Group 3 subfamily. As to quaternary structure, exists as aggregates of 3-4 molecules. In terms of tissue distribution, expressed by the skin glands.

It localises to the secreted. Its function is as follows. Thanks to its abundant amphiphilic alpha-helices, it may integrate into membrane phospholipids, leading to lysis of the membrane. Has hemolytic activity. Has antibacterial activity with a broad spectrum against various species of bacteria including both Gram-positive and Gram-negative groups. Also has ichthyotoxic activity. The polypeptide is Grammistin Pp 3 (Pogonoperca punctata (Clown grouper)).